The chain runs to 194 residues: Peptidyl-tRNA hydrolase (194 aa).

Tyrosine 16 is a tRNA binding site. The active-site Proton acceptor is histidine 21. 3 residues coordinate tRNA: phenylalanine 67, asparagine 69, and asparagine 115.

The protein belongs to the PTH family. Monomer.

The protein resides in the cytoplasm. It catalyses the reaction an N-acyl-L-alpha-aminoacyl-tRNA + H2O = an N-acyl-L-amino acid + a tRNA + H(+). Hydrolyzes ribosome-free peptidyl-tRNAs (with 1 or more amino acids incorporated), which drop off the ribosome during protein synthesis, or as a result of ribosome stalling. Its function is as follows. Catalyzes the release of premature peptidyl moieties from peptidyl-tRNA molecules trapped in stalled 50S ribosomal subunits, and thus maintains levels of free tRNAs and 50S ribosomes. The sequence is that of Peptidyl-tRNA hydrolase from Shigella boydii serotype 18 (strain CDC 3083-94 / BS512).